The following is a 118-amino-acid chain: Phosphoribosyl-AMP cyclohydrolase (118 aa).

Residue aspartate 87 coordinates Mg(2+). Cysteine 88 is a binding site for Zn(2+). Aspartate 89 and aspartate 91 together coordinate Mg(2+). Positions 104 and 111 each coordinate Zn(2+).

It belongs to the PRA-CH family. In terms of assembly, homodimer. Mg(2+) is required as a cofactor. It depends on Zn(2+) as a cofactor.

The protein localises to the cytoplasm. It catalyses the reaction 1-(5-phospho-beta-D-ribosyl)-5'-AMP + H2O = 1-(5-phospho-beta-D-ribosyl)-5-[(5-phospho-beta-D-ribosylamino)methylideneamino]imidazole-4-carboxamide. The protein operates within amino-acid biosynthesis; L-histidine biosynthesis; L-histidine from 5-phospho-alpha-D-ribose 1-diphosphate: step 3/9. Functionally, catalyzes the hydrolysis of the adenine ring of phosphoribosyl-AMP. This chain is Phosphoribosyl-AMP cyclohydrolase, found in Corynebacterium glutamicum (strain ATCC 13032 / DSM 20300 / JCM 1318 / BCRC 11384 / CCUG 27702 / LMG 3730 / NBRC 12168 / NCIMB 10025 / NRRL B-2784 / 534).